The sequence spans 284 residues: Aldo-keto reductase MAV_3816 (284 aa).

Residue Tyr-59 is the Proton donor of the active site. NADPH is bound by residues Leu-199, Ile-237, Arg-239, Ser-240, Ala-241, Ser-248, and Arg-275.

This sequence belongs to the aldo/keto reductase family.

The sequence is that of Aldo-keto reductase MAV_3816 from Mycobacterium avium (strain 104).